A 320-amino-acid chain; its full sequence is Transaldolase (320 aa).

The Schiff-base intermediate with substrate role is filled by lysine 126.

This sequence belongs to the transaldolase family. Type 1 subfamily. As to quaternary structure, homodimer.

The protein localises to the cytoplasm. The catalysed reaction is D-sedoheptulose 7-phosphate + D-glyceraldehyde 3-phosphate = D-erythrose 4-phosphate + beta-D-fructose 6-phosphate. The protein operates within carbohydrate degradation; pentose phosphate pathway; D-glyceraldehyde 3-phosphate and beta-D-fructose 6-phosphate from D-ribose 5-phosphate and D-xylulose 5-phosphate (non-oxidative stage): step 2/3. In terms of biological role, transaldolase is important for the balance of metabolites in the pentose-phosphate pathway. This Bordetella pertussis (strain Tohama I / ATCC BAA-589 / NCTC 13251) protein is Transaldolase.